The following is a 271-amino-acid chain: Eukaryotic translation initiation factor 2 subunit beta (271 aa).

Residues 223–247 form a C4-type zinc finger; it reads CLGCQSPDTILSKENRLFFLRCEKC.

Belongs to the eIF-2-beta/eIF-5 family. As to quaternary structure, eukaryotic translation initiation factor 2 eIF2 is a heterotrimeric complex composed of an alpha, a beta and a gamma subunit.

Its subcellular location is the cytoplasm. It is found in the cytosol. In terms of biological role, component of the eIF2 complex that functions in the early steps of protein synthesis by forming a ternary complex with GTP and initiator tRNA. This complex binds to a 40S ribosomal subunit, followed by mRNA binding to form a 43S pre-initiation complex (43S PIC). Junction of the 60S ribosomal subunit to form the 80S initiation complex is preceded by hydrolysis of the GTP bound to eIF2 and release of an eIF2-GDP binary complex. In order for eIF2 to recycle and catalyze another round of initiation, the GDP bound to eIF2 must exchange with GTP by way of a reaction catalyzed by eIF2B. This chain is Eukaryotic translation initiation factor 2 subunit beta, found in Malus domestica (Apple).